The sequence spans 279 residues: uncharacterized protein (279 aa).

The HTH lysR-type domain maps to 14-71; it reads ITPNQIKLLIALHKTKSQNEAAKLLNIKPSSFNIQLKRLENKLGVKLYYSSPNGTVLT. A DNA-binding region (H-T-H motif) is located at residues 31 to 50; sequence QNEAAKLLNIKPSSFNIQLK.

This sequence belongs to the LysR transcriptional regulatory family.

This is an uncharacterized protein from Methanocaldococcus jannaschii (strain ATCC 43067 / DSM 2661 / JAL-1 / JCM 10045 / NBRC 100440) (Methanococcus jannaschii).